Consider the following 504-residue polypeptide: Ent-kaurene oxidase-like 3 (504 aa).

Residues 3–23 form a helical membrane-spanning segment; that stretch reads SLLAAGAGGIGVAAAAVGGFI. Position 448 (Cys448) interacts with heme.

It belongs to the cytochrome P450 family. It depends on heme as a cofactor. Expressed in leaf blades.

Its subcellular location is the membrane. Its function is as follows. May hydroxylate diterpenes. The sequence is that of Ent-kaurene oxidase-like 3 from Oryza sativa subsp. japonica (Rice).